The primary structure comprises 362 residues: Adenosine deaminase (362 aa).

Residues His19 and His21 each coordinate Zn(2+). Substrate-binding residues include His21, Asp23, and Gly181. Zn(2+) is bound at residue His208. The active-site Proton donor is the Glu211. Zn(2+) is bound at residue Asp300.

The protein belongs to the metallo-dependent hydrolases superfamily. Adenosine and AMP deaminases family. Adenosine deaminase subfamily. Requires Zn(2+) as cofactor.

It catalyses the reaction adenosine + H2O + H(+) = inosine + NH4(+). It carries out the reaction 2'-deoxyadenosine + H2O + H(+) = 2'-deoxyinosine + NH4(+). Catalyzes the hydrolytic deamination of adenosine and 2-deoxyadenosine. The protein is Adenosine deaminase of Mycobacteroides abscessus (strain ATCC 19977 / DSM 44196 / CCUG 20993 / CIP 104536 / JCM 13569 / NCTC 13031 / TMC 1543 / L948) (Mycobacterium abscessus).